A 371-amino-acid polypeptide reads, in one-letter code: Chaperone protein DnaJ (371 aa).

Positions 5 to 69 (DYYEVLGLSK…QKRAQYDQFG (65 aa)) constitute a J domain. The CR-type zinc-finger motif lies at 133–215 (GKELNVEIPV…CHGSGKVRKR (83 aa)). 8 residues coordinate Zn(2+): C146, C149, C163, C166, C189, C192, C203, and C206. CXXCXGXG motif repeat units follow at residues 146-153 (CDTCKGSG), 163-170 (CKHCSGSG), 189-196 (CSHCSGTG), and 203-210 (CTTCHGSG).

Belongs to the DnaJ family. In terms of assembly, homodimer. It depends on Zn(2+) as a cofactor.

The protein resides in the cytoplasm. Functionally, participates actively in the response to hyperosmotic and heat shock by preventing the aggregation of stress-denatured proteins and by disaggregating proteins, also in an autonomous, DnaK-independent fashion. Unfolded proteins bind initially to DnaJ; upon interaction with the DnaJ-bound protein, DnaK hydrolyzes its bound ATP, resulting in the formation of a stable complex. GrpE releases ADP from DnaK; ATP binding to DnaK triggers the release of the substrate protein, thus completing the reaction cycle. Several rounds of ATP-dependent interactions between DnaJ, DnaK and GrpE are required for fully efficient folding. Also involved, together with DnaK and GrpE, in the DNA replication of plasmids through activation of initiation proteins. This Bacillus cereus (strain 03BB102) protein is Chaperone protein DnaJ.